Here is a 198-residue protein sequence, read N- to C-terminus: Probable GTP-binding protein EngB (198 aa).

The 176-residue stretch at T22–S197 folds into the EngB-type G domain. GTP is bound by residues G30–S37, G57–L61, D75–G78, T142–D145, and I175–A178. Mg(2+)-binding residues include S37 and T59.

The protein belongs to the TRAFAC class TrmE-Era-EngA-EngB-Septin-like GTPase superfamily. EngB GTPase family. Mg(2+) is required as a cofactor.

Its function is as follows. Necessary for normal cell division and for the maintenance of normal septation. The chain is Probable GTP-binding protein EngB from Christiangramia forsetii (strain DSM 17595 / CGMCC 1.15422 / KT0803) (Gramella forsetii).